Consider the following 148-residue polypeptide: Transcriptional repressor NrdR (148 aa).

A disordered region spans residues 1–22 (MKCPYCSAPDSKVVNSRPSDDG). A zinc finger lies at 3–34 (CPYCSAPDSKVVNSRPSDDGASIRRRRECLNC). The ATP-cone domain maps to 49 to 136 (LMVVKRSGPR…VYRDFDSLER (88 aa)).

The protein belongs to the NrdR family. Zn(2+) is required as a cofactor.

Functionally, negatively regulates transcription of bacterial ribonucleotide reductase nrd genes and operons by binding to NrdR-boxes. This Deinococcus deserti (strain DSM 17065 / CIP 109153 / LMG 22923 / VCD115) protein is Transcriptional repressor NrdR.